The following is a 578-amino-acid chain: Zinc finger protein 248 (578 aa).

One can recognise a KRAB domain in the interval 8–78 (VSFKDVCVDF…LEKGFPSQDP (71 aa)). A C2H2-type 1; degenerate zinc finger spans residues 239–263 (TVCKYNECGRTFIESLKLNISQRPH). K340 is covalently cross-linked (Glycyl lysine isopeptide (Lys-Gly) (interchain with G-Cter in SUMO2)). 7 C2H2-type zinc fingers span residues 379-401 (FECG…QRTH), 407-429 (YECT…QRTH), 435-457 (YECK…QRTH), 463-485 (YECN…QRTH), 491-513 (FICN…QRTH), 519-542 (YKCN…RTHT), and 547-569 (YECN…QRIH).

Belongs to the krueppel C2H2-type zinc-finger protein family.

The protein localises to the nucleus. May be involved in transcriptional regulation. The chain is Zinc finger protein 248 (ZNF248) from Pongo abelii (Sumatran orangutan).